The following is a 350-amino-acid chain: Putative zinc metalloprotease jhp_0242 (350 aa).

Residue His16 coordinates Zn(2+). The active site involves Glu17. His20 provides a ligand contact to Zn(2+). 5 helical membrane passes run 43 to 63 (WFFKLFGTQFALSLIPLGGYV), 94 to 114 (LWILFGGAFFNFLFAVLVYFF), 249 to 269 (LIMGSASVKELSGVIGIVGAL), 277 to 297 (MLLLFGAFLSINLGILNLLPI), and 326 to 346 (LWLVGVGFLVFVMFLGLFNDI). Residues 108–177 (AVLVYFFLAL…GELILEIERN (70 aa)) form the PDZ domain.

The protein belongs to the peptidase M50B family. The cofactor is Zn(2+).

Its subcellular location is the cell inner membrane. The polypeptide is Putative zinc metalloprotease jhp_0242 (Helicobacter pylori (strain J99 / ATCC 700824) (Campylobacter pylori J99)).